Consider the following 383-residue polypeptide: Bifunctional enzyme IspD/IspF (383 aa).

Positions 1-226 (MKIAAVIVAA…ERQIMSETIT (226 aa)) are 2-C-methyl-D-erythritol 4-phosphate cytidylyltransferase. The interval 227 to 383 (VTGQGYDVHR…QAIVTARLTT (157 aa)) is 2-C-methyl-D-erythritol 2,4-cyclodiphosphate synthase. A divalent metal cation is bound by residues Asp233 and His235. Residues 233–235 (DVH) and 259–260 (HS) each bind 4-CDP-2-C-methyl-D-erythritol 2-phosphate. His267 is a binding site for a divalent metal cation. 4-CDP-2-C-methyl-D-erythritol 2-phosphate is bound by residues 281-283 (DIG), 357-360 (TTTE), Phe364, and Arg367.

The protein in the N-terminal section; belongs to the IspD/TarI cytidylyltransferase family. IspD subfamily. This sequence in the C-terminal section; belongs to the IspF family. A divalent metal cation serves as cofactor.

It catalyses the reaction 2-C-methyl-D-erythritol 4-phosphate + CTP + H(+) = 4-CDP-2-C-methyl-D-erythritol + diphosphate. It carries out the reaction 4-CDP-2-C-methyl-D-erythritol 2-phosphate = 2-C-methyl-D-erythritol 2,4-cyclic diphosphate + CMP. It functions in the pathway isoprenoid biosynthesis; isopentenyl diphosphate biosynthesis via DXP pathway; isopentenyl diphosphate from 1-deoxy-D-xylulose 5-phosphate: step 2/6. Its pathway is isoprenoid biosynthesis; isopentenyl diphosphate biosynthesis via DXP pathway; isopentenyl diphosphate from 1-deoxy-D-xylulose 5-phosphate: step 4/6. Bifunctional enzyme that catalyzes the formation of 4-diphosphocytidyl-2-C-methyl-D-erythritol from CTP and 2-C-methyl-D-erythritol 4-phosphate (MEP) (IspD), and catalyzes the conversion of 4-diphosphocytidyl-2-C-methyl-D-erythritol 2-phosphate (CDP-ME2P) to 2-C-methyl-D-erythritol 2,4-cyclodiphosphate (ME-CPP) with a corresponding release of cytidine 5-monophosphate (CMP) (IspF). The sequence is that of Bifunctional enzyme IspD/IspF from Maricaulis maris (strain MCS10) (Caulobacter maris).